The following is a 253-amino-acid chain: Shikimate dehydrogenase (NADP(+)) (253 aa).

Shikimate is bound by residues 13–15 (SIS) and T59. The Proton acceptor role is filled by K63. Residue E74 participates in NADP(+) binding. The shikimate site is built by N83 and D94. NADP(+) contacts are provided by residues 115 to 119 (GAGGA), 139 to 144 (NRTIER), and V199. Y201 contacts shikimate. An NADP(+)-binding site is contributed by G221.

Belongs to the shikimate dehydrogenase family. As to quaternary structure, homodimer.

It carries out the reaction shikimate + NADP(+) = 3-dehydroshikimate + NADPH + H(+). It functions in the pathway metabolic intermediate biosynthesis; chorismate biosynthesis; chorismate from D-erythrose 4-phosphate and phosphoenolpyruvate: step 4/7. Functionally, involved in the biosynthesis of the chorismate, which leads to the biosynthesis of aromatic amino acids. Catalyzes the reversible NADPH linked reduction of 3-dehydroshikimate (DHSA) to yield shikimate (SA). The sequence is that of Shikimate dehydrogenase (NADP(+)) from Thermotoga maritima (strain ATCC 43589 / DSM 3109 / JCM 10099 / NBRC 100826 / MSB8).